A 372-amino-acid polypeptide reads, in one-letter code: GTPase Obg (372 aa).

The region spanning 1 to 159 (MKFIDEARIE…RMLKLELKVL (159 aa)) is the Obg domain. Residues 128-147 (LHFKSSTNRAPRQKTDGKPG) are disordered. The OBG-type G domain maps to 160–334 (ADVGLLGMPN…LVYAIYDYLA (175 aa)). GTP contacts are provided by residues 166–173 (GMPNAGKS), 191–195 (FTTLA), 213–216 (DIPG), 284–287 (NKLD), and 315–317 (SAL). Residues S173 and T193 each contribute to the Mg(2+) site.

It belongs to the TRAFAC class OBG-HflX-like GTPase superfamily. OBG GTPase family. In terms of assembly, monomer. Requires Mg(2+) as cofactor.

The protein localises to the cytoplasm. Functionally, an essential GTPase which binds GTP, GDP and possibly (p)ppGpp with moderate affinity, with high nucleotide exchange rates and a fairly low GTP hydrolysis rate. Plays a role in control of the cell cycle, stress response, ribosome biogenesis and in those bacteria that undergo differentiation, in morphogenesis control. In Burkholderia thailandensis (strain ATCC 700388 / DSM 13276 / CCUG 48851 / CIP 106301 / E264), this protein is GTPase Obg.